A 432-amino-acid polypeptide reads, in one-letter code: Enolase (432 aa).

Glutamine 167 is a binding site for (2R)-2-phosphoglycerate. Glutamate 209 functions as the Proton donor in the catalytic mechanism. Positions 246, 291, and 318 each coordinate Mg(2+). Residues lysine 343, arginine 372, serine 373, and lysine 394 each contribute to the (2R)-2-phosphoglycerate site. Lysine 343 functions as the Proton acceptor in the catalytic mechanism.

This sequence belongs to the enolase family. In terms of assembly, component of the RNA degradosome, a multiprotein complex involved in RNA processing and mRNA degradation. Mg(2+) is required as a cofactor.

The protein resides in the cytoplasm. Its subcellular location is the secreted. The protein localises to the cell surface. It carries out the reaction (2R)-2-phosphoglycerate = phosphoenolpyruvate + H2O. The protein operates within carbohydrate degradation; glycolysis; pyruvate from D-glyceraldehyde 3-phosphate: step 4/5. Its function is as follows. Catalyzes the reversible conversion of 2-phosphoglycerate (2-PG) into phosphoenolpyruvate (PEP). It is essential for the degradation of carbohydrates via glycolysis. The chain is Enolase from Pseudoalteromonas translucida (strain TAC 125).